The chain runs to 208 residues: Fibroblast growth factor 6 (208 aa).

Positions 1-37 (MALGQKLFITMSRGAGRLQGTLWALVFLGILVGMVVP) are cleaved as a signal peptide. N-linked (GlcNAc...) asparagine glycosylation occurs at asparagine 45. Residues cysteine 90 and cysteine 157 are joined by a disulfide bond.

The protein belongs to the heparin-binding growth factors family. Interacts with FGFR1, FGFR2 and FGFR4. Affinity between fibroblast growth factors (FGFs) and their receptors is increased by heparan sulfate glycosaminoglycans that function as coreceptors. As to expression, leukemia cell lines with platelet/ megakaryocytic differentiation potential.

It localises to the secreted. The protein localises to the extracellular space. Its function is as follows. Plays an important role in the regulation of cell proliferation, cell differentiation, angiogenesis and myogenesis, and is required for normal muscle regeneration. This Homo sapiens (Human) protein is Fibroblast growth factor 6 (FGF6).